Consider the following 374-residue polypeptide: MPLLDTPFAQLDLIRQPEQQNEPLQAFDAADEYLLNHLAEQNLPIETRVLVLNDSFGALAISLSGNVQVSTSGDSFLAFQGLEKNLLRNGQAFDALRGIPASEPLVGPFDRVLIRVPKTLALLEEQLIRLQGQLAPGAQVVAAAMVKHLPRAAGDLLERYIGPVQASLAVKKARLLIATPEAKAPAVSPYPTRYRLDEPAIELLNHANVFCREGLDIGTRAFLPHLPKNLGAAGVADLGCGNGVLAIASALQNPDAHYTLVDESFMAVQSAAENWRAALGEREAIVRAGDGLAGQEAQSLDVVLCNPPFHQQQVVGDFLAWRMFQQAREALVVGGALYIVGNRHLGYHSKLARLFRGVEQVAATPKFVILKARK.

It belongs to the methyltransferase superfamily. RlmG family.

It is found in the cytoplasm. It catalyses the reaction guanosine(1835) in 23S rRNA + S-adenosyl-L-methionine = N(2)-methylguanosine(1835) in 23S rRNA + S-adenosyl-L-homocysteine + H(+). In terms of biological role, specifically methylates the guanine in position 1835 (m2G1835) of 23S rRNA. The sequence is that of Ribosomal RNA large subunit methyltransferase G from Pseudomonas fluorescens (strain Pf0-1).